The following is a 116-amino-acid chain: PTS system cellobiose-specific EIIA component (116 aa).

In terms of domain architecture, PTS EIIA type-3 spans 11–109 (DDYMGVVMGI…AVEVVGQEQR (99 aa)). His85 acts as the Tele-phosphohistidine intermediate in catalysis. His85 carries the post-translational modification Phosphohistidine; by HPr. Asp88 lines the Mg(2+) pocket.

Homotrimer. The cofactor is Mg(2+).

Functionally, the phosphoenolpyruvate-dependent sugar phosphotransferase system (sugar PTS), a major carbohydrate active transport system, catalyzes the phosphorylation of incoming sugar substrates concomitantly with their translocation across the cell membrane. Involved in cellobiose transport with PtcB and CelB. This system can also transport lactose. The polypeptide is PTS system cellobiose-specific EIIA component (Lactococcus lactis subsp. lactis (strain IL1403) (Streptococcus lactis)).